The sequence spans 244 residues: UDP-2,3-diacylglucosamine hydrolase (244 aa).

Residues aspartate 8, histidine 10, aspartate 41, asparagine 79, and histidine 114 each coordinate Mn(2+). A substrate-binding site is contributed by 79–80; the sequence is NR. The substrate site is built by aspartate 122, serine 160, asparagine 164, lysine 167, and histidine 195. Mn(2+)-binding residues include histidine 195 and histidine 197.

This sequence belongs to the LpxH family. It depends on Mn(2+) as a cofactor.

The protein localises to the cell inner membrane. The enzyme catalyses UDP-2-N,3-O-bis[(3R)-3-hydroxytetradecanoyl]-alpha-D-glucosamine + H2O = 2-N,3-O-bis[(3R)-3-hydroxytetradecanoyl]-alpha-D-glucosaminyl 1-phosphate + UMP + 2 H(+). Its pathway is glycolipid biosynthesis; lipid IV(A) biosynthesis; lipid IV(A) from (3R)-3-hydroxytetradecanoyl-[acyl-carrier-protein] and UDP-N-acetyl-alpha-D-glucosamine: step 4/6. Its function is as follows. Hydrolyzes the pyrophosphate bond of UDP-2,3-diacylglucosamine to yield 2,3-diacylglucosamine 1-phosphate (lipid X) and UMP by catalyzing the attack of water at the alpha-P atom. Involved in the biosynthesis of lipid A, a phosphorylated glycolipid that anchors the lipopolysaccharide to the outer membrane of the cell. The protein is UDP-2,3-diacylglucosamine hydrolase of Marinobacter nauticus (strain ATCC 700491 / DSM 11845 / VT8) (Marinobacter aquaeolei).